The primary structure comprises 242 residues: Copper transport protein B (242 aa).

The next 2 membrane-spanning stretches (helical) occupy residues 8–28 and 86–106; these read ICLC…ACVL and ITGP…TAGY. The disordered stretch occupies residues 153-175; sequence ESATTNVPSSQTPNESSPLVAGR. The segment covering 154 to 169 has biased composition (polar residues); that stretch reads SATTNVPSSQTPNESS. A run of 2 helical transmembrane segments spans residues 187–207 and 210–230; these read IILA…MLLF and YNGF…LVFG.

This sequence belongs to the copper transporter (Ctr) (TC 1.A.56) family. SLC31A subfamily.

It is found in the membrane. Its function is as follows. Transporter that is probably involved in the transport of copper, even if it does not act as a major copper transporter. This Aspergillus fumigatus (strain ATCC MYA-4609 / CBS 101355 / FGSC A1100 / Af293) (Neosartorya fumigata) protein is Copper transport protein B.